Reading from the N-terminus, the 283-residue chain is ATP synthase gamma chain (283 aa).

This sequence belongs to the ATPase gamma chain family. As to quaternary structure, F-type ATPases have 2 components, CF(1) - the catalytic core - and CF(0) - the membrane proton channel. CF(1) has five subunits: alpha(3), beta(3), gamma(1), delta(1), epsilon(1). CF(0) has three main subunits: a, b and c.

It localises to the cell inner membrane. In terms of biological role, produces ATP from ADP in the presence of a proton gradient across the membrane. The gamma chain is believed to be important in regulating ATPase activity and the flow of protons through the CF(0) complex. This Ehrlichia ruminantium (strain Gardel) protein is ATP synthase gamma chain.